A 109-amino-acid polypeptide reads, in one-letter code: Nucleoid-associated protein Spea_1509 (109 aa).

Residues 87-109 (NQKEKMAEVTGGMQLPPGMKMPF) form a disordered region.

It belongs to the YbaB/EbfC family. In terms of assembly, homodimer.

It is found in the cytoplasm. The protein localises to the nucleoid. Binds to DNA and alters its conformation. May be involved in regulation of gene expression, nucleoid organization and DNA protection. In Shewanella pealeana (strain ATCC 700345 / ANG-SQ1), this protein is Nucleoid-associated protein Spea_1509.